Reading from the N-terminus, the 98-residue chain is Protein translation factor SUI1 homolog (98 aa).

This sequence belongs to the SUI1 family.

This is Protein translation factor SUI1 homolog from Pyrococcus abyssi (strain GE5 / Orsay).